Here is a 581-residue protein sequence, read N- to C-terminus: MLVAMNGFIDWGCLPNFNSPAVFSSILDKKKGGYFAIYPTDTHDLYVDQYYKELTNILVTEFIKNGKVILRTTDFMPDSEYGKISFPEVHRFVETFSDPVRITIDFKPAFNYATERPLIQRVQHGFIFSTEKENMGISTEFQLKKNADHVFADVDMEPRSSSWVIALYGIHHLYRPTDYKSYLRLQETTDYWRKWASNSTYSGMYHSMVMRSALALKVLFYEPTGMMVAAPTASLPEAIGGERNWDYRYTWIRDTAYVIEALATIGYKREAVSFLYDMMDVISRENKIRTIYSIDNSDDFVERELDFEGYRGSRPVRIGNKAVDQLQIDQYGSIVRAIHAMEKAGGVVNSYLWDFVEEMMAKIEYLWKYPDSSIWEFRTEPKQYVYSKVMSWAAFDSAITMARDLGLTAPIKKWKGIQDEIWNDVMTKGFDPQTNSFVQYYGSKNVDASLLRLPILGFIPANDERFIGTMKRIEDELMVDGYLFRRYREDDGLKGDEGSFLMLTFWYIEDLILMKRLKAARAALESIIEKANHLGLYSEEIDEKTGDFLGNFPQALSHLGIIRVAPKLEEAFLKRVSKINE.

Belongs to the glycosyl hydrolase 15 family. As to quaternary structure, monomer.

The enzyme catalyses alpha,alpha-trehalose + H2O = alpha-D-glucose + beta-D-glucose. It participates in glycan degradation; trehalose degradation; D-glucose from alpha,alpha-trehalose: step 1/1. Inhibited by validamycin A. Functionally, catalyzes the hydrolysis of alpha,alpha-trehalose into two molecules of D-glucose. The protein is Trehalase of Thermoplasma acidophilum (strain ATCC 25905 / DSM 1728 / JCM 9062 / NBRC 15155 / AMRC-C165).